The chain runs to 916 residues: Transmembrane channel-like protein 2-A (916 aa).

Positions 1–13 (MPKKSDTTRKLED) are enriched in basic and acidic residues. The disordered stretch occupies residues 1–159 (MPKKSDTTRK…DEEDESMSEG (159 aa)). At 1-271 (MPKKSDTTRK…IFLRWMYGMN (271 aa)) the chain is on the cytoplasmic side. Positions 14–26 (VGIEIDGDVDSAE) are enriched in acidic residues. Basic residues-rich tracts occupy residues 31–45 (SKGK…GKRG) and 62–72 (KGRRAANKKKP). Basic and acidic residues predominate over residues 97 to 107 (NVRERGDGDKK). The segment covering 108-117 (KSGKKGRRGG) has biased composition (basic residues). Residues 118-138 (KKNEKGKGKDSDKDSDKDEKK) show a composition bias toward basic and acidic residues. A compositionally biased stretch (acidic residues) spans 145–157 (DESDSDEEDESMS). The helical transmembrane segment at 272-292 (LVLFSLTFGLVVIPEVLMGLP) threads the bilayer. Topologically, residues 293 to 344 (YGSIPRKTVPREDQDTAMDYSVLTDFNGYCKYSVLFYGYYNNQRTIGFLKFR) are extracellular. A helical membrane pass occupies residues 345 to 365 (LPLSYLMVGIGTFGYSLMVVI). Over 366–438 (RTMAKNADVG…ENIHLRRFLR (73 aa)) the chain is Cytoplasmic. Residues 439–459 (VLANFLITCTLGGSGYLIYFV) traverse the membrane as a helical segment. The Extracellular segment spans residues 460 to 478 (VKRSQEFQNMDNLSWYEKN). Residues 479-499 (ELEIIMSLLGLVGPMLFETIA) form a helical membrane-spanning segment. Over 500 to 516 (ELEEYHPRIALKWQLGR) the chain is Cytoplasmic. The helical transmembrane segment at 517–537 (IFALFLGNLYTFLLALFDEVN) threads the bilayer. Over 538–649 (AKLEEEESIK…EFDISGNVLG (112 aa)) the chain is Extracellular. Residues 650 to 670 (LVFNQGMIWMGAFYAPGLVGI) traverse the membrane as a helical segment. Residues 671–704 (NVLRLLSSMYYQCWAVMACNVPHERVFKASKSNN) are Cytoplasmic-facing. A helical membrane pass occupies residues 705-725 (FYMGLLLLILFLSLLPVVYTI). Over 726–762 (MSLPPSFDCGPFSGKERMFDVVMETIDLDLPAFMGTL) the chain is Extracellular. Residues 763 to 783 (FGYVANPGLVISAVLLMVLAI) traverse the membrane as a helical segment. The Cytoplasmic portion of the chain corresponds to 784–916 (YYLNSVSEAY…RGQGPPPRRQ (133 aa)). The segment covering 804-818 (MQMARDEEKNRRNNK) has biased composition (basic and acidic residues). The tract at residues 804 to 916 (MQMARDEEKN…RGQGPPPRRQ (113 aa)) is disordered. Positions 883–892 (ARGPVTRAPG) are enriched in low complexity.

It belongs to the TMC family. Interacts (via N-terminus) with both isoforms CD1 and CD3 of PCDH15A (via cytoplasmic domain); this interaction is required for mechanotransduction of the hair cells and correct localization of PCDH15A in hair bundles of the hair cells. In adults, expression is restricted to the hair cells of inner ear and lateral line organ. Expressed at higher levels in the larval inner ear than in the lateral-line neuromasts.

It is found in the cell membrane. It catalyses the reaction Ca(2+)(in) = Ca(2+)(out). Functionally, pore-forming subunit of the mechanotransducer (MET) non-selective cation channel complex located at tips of hair-cell stereocilia. Highly permeable to calcium and likely transports monovalent cations. The polypeptide is Transmembrane channel-like protein 2-A (Danio rerio (Zebrafish)).